The following is a 306-amino-acid chain: UDP-N-acetylenolpyruvoylglucosamine reductase (306 aa).

The 166-residue stretch at 34-199 (RVGGPAQLLF…TSVRLRGAIA (166 aa)) folds into the FAD-binding PCMH-type domain. Residue Arg-179 is part of the active site. The active-site Proton donor is Ser-228. Glu-298 is a catalytic residue.

This sequence belongs to the MurB family. FAD serves as cofactor.

It is found in the cytoplasm. It carries out the reaction UDP-N-acetyl-alpha-D-muramate + NADP(+) = UDP-N-acetyl-3-O-(1-carboxyvinyl)-alpha-D-glucosamine + NADPH + H(+). It participates in cell wall biogenesis; peptidoglycan biosynthesis. Functionally, cell wall formation. The chain is UDP-N-acetylenolpyruvoylglucosamine reductase from Rhodopseudomonas palustris (strain BisA53).